The chain runs to 311 residues: 3-oxo-4,17-pregnadiene-20-carboxyl-CoA hydratase alpha subunit (311 aa).

Residues 198–295 (WDGVKAHELR…VAIGMPVRAT (98 aa)) form a DUF35 region.

The protein belongs to the thioester dehydratase family. In terms of assembly, heterodimer composed of ChsH1 and ChsH2. Two heterodimers combine to form a heterotetramer. The complex interacts with Ltp2 via the DUF35 C-terminal region of ChsH2. The ChsH1-ChsH2-Ltp2 protein complex is composed of two protomers that form a heterohexameric structure through the Ltp2 dimerization interface.

The catalysed reaction is 3-oxochola-4,17-dien-22-oyl-CoA + H2O = 17-hydroxy-3-oxochol-4-en-22-oyl-CoA. It catalyses the reaction (2E)-octenoyl-CoA + H2O = 3-hydroxyoctanoyl-CoA. The enzyme catalyses (2E)-decenoyl-CoA + H2O = 3-hydroxydecanoyl-CoA. It functions in the pathway steroid metabolism; cholesterol degradation. With respect to regulation, in the absence of the Ltp2 aldolase, ChsH1/ChsH2 can hydrate only about 30% of the 3-OPDC-CoA substrate. Complete turnover requires the presence of Ltp2. In terms of biological role, involved in cholesterol side chain degradation. Catalyzes the hydration of 3-oxo-4,17-pregnadiene-20-carboxyl-CoA (3-OPDC-CoA) to form 17-hydroxy-3-oxo-4-pregnene-20-carboxyl-CoA (17-HOPC-CoA), in the modified beta-oxidation pathway for cholesterol side chain degradation. Can also use octenoyl-CoA and decenoyl-CoA, with lower efficiency. This Mycobacterium tuberculosis (strain ATCC 25618 / H37Rv) protein is 3-oxo-4,17-pregnadiene-20-carboxyl-CoA hydratase alpha subunit.